Reading from the N-terminus, the 385-residue chain is Serine/threonine-protein kinase 52 (385 aa).

The Protein kinase domain maps to Leu82 to Leu356. ATP-binding positions include Leu88 to Val96 and Lys109. The active-site Proton acceptor is Asp227.

Belongs to the protein kinase superfamily. Ser/Thr protein kinase family. As to quaternary structure, binds to CBC1. Associates with PHOT1, PHOT2, BLUS1 and PM H(+)-ATPase (e.g. AHA1). Autophosphorylated. Phosphorylated by HT1 in response to low CO(2) concentrations. As to expression, expressed in guard cells.

It is found in the cytoplasm. The protein resides in the cytosol. It catalyses the reaction L-seryl-[protein] + ATP = O-phospho-L-seryl-[protein] + ADP + H(+). The catalysed reaction is L-threonyl-[protein] + ATP = O-phospho-L-threonyl-[protein] + ADP + H(+). Its function is as follows. Serine/threonine protein kinase that phosphorylates proteins on serine and threonine residues. Collectively with CBC1, acts as a negative regulator of stomatal opening, probably via the inhibition of plasma membrane-type ATPases (AHA1 and AHA2) activity in guard cells, but in an abscisic acid (ABA)-independent manner. However, at low concentrations of CO(2), together with CBC1, stimulates stomatal opening via the inhibition of S-type anion channels in response to blue light (BL) and red light (RL), thus being a key component to maximize photosynthesis in the light under low CO(2) conditions. Required for temperature decrease in leaves. Downstream target of HIGH LEAF TEMPERATURE1 (HT1) during low CO(2)-induced stomatal opening. The protein is Serine/threonine-protein kinase 52 of Arabidopsis thaliana (Mouse-ear cress).